We begin with the raw amino-acid sequence, 615 residues long: MPPFFAEFTESVFRHFRRNEPDEENSAICSEKMSSYGAIGVDDNDTDPLLDDEPPRRLPPAGGVPIGRRRAISASQIGSIPSQSAATRQPYLFTGGLGLRDESLLSLHSEDDLHREHNNALRYRLYNRLDPGGEHLTMPDHVLPPNLFSILPFEELKDVSGKQGSIVTIFSIWNTMMGTSLLAMPWALQQAGLVLGIIIMLSMAAICFYTAYIVIESPKRLQDLSVDPLLAEFSDVCKSLFGRIGEYCAVVFSVCVLIGGVIVYWVLMSNFLYYTGAVVYESMQPNSTTIPVMENKTFTCDVYCPEQTSQWTIPQWEKQLYDAVSEMEGGETGDDSWSFDKFWTLRGTVPIYLAFALFPLMNFKSPTFFTKFNVLGTISVMYLLMFVFSKLLECGVNMDFSNPKSIHYVQLANMHFPALSGTLTLSYFIHNAVLTILRNQKHPENNARDLSIGYCLVAFCYVFIGFTFFAAFPVQRSCISDNFLNNFGAGDVLSSTARLFLLFQMITVLPLLMFLVRSQLFYAIFGQTWPGAIRVIILNVLLIAVAVGFATFYPNVGSILRYVGSISGLVYVFALPAMVYIKQSEAAGTLTPMKKYAHYGIIVIGVANLIAQFVI.

Residues 1 to 165 (MPPFFAEFTE…LKDVSGKQGS (165 aa)) lie on the Cytoplasmic side of the membrane. Residues 41–65 (VDDNDTDPLLDDEPPRRLPPAGGVP) form a disordered region. Residues 42–52 (DDNDTDPLLDD) show a composition bias toward acidic residues. Residues 166 to 186 (IVTIFSIWNTMMGTSLLAMPW) form a helical membrane-spanning segment. The interval 175 to 180 (TMMGTS) is important for arginine binding and amino acid transport. The Lumenal segment spans residues 187 to 192 (ALQQAG). A helical membrane pass occupies residues 193–213 (LVLGIIIMLSMAAICFYTAYI). The Cytoplasmic portion of the chain corresponds to 214-246 (VIESPKRLQDLSVDPLLAEFSDVCKSLFGRIGE). A helical transmembrane segment spans residues 247–273 (YCAVVFSVCVLIGGVIVYWVLMSNFLY). Topologically, residues 274–341 (YTGAVVYESM…TGDDSWSFDK (68 aa)) are lumenal. Residues Asn-286 and Asn-295 are each glycosylated (N-linked (GlcNAc...) asparagine). Cys-304 and Cys-478 are oxidised to a cystine. A helical transmembrane segment spans residues 342–358 (FWTLRGTVPIYLAFALF). Topologically, residues 359-367 (PLMNFKSPT) are cytoplasmic. The helical transmembrane segment at 368–392 (FFTKFNVLGTISVMYLLMFVFSKLL) threads the bilayer. Topologically, residues 393–413 (ECGVNMDFSNPKSIHYVQLAN) are lumenal. The chain crosses the membrane as a helical span at residues 414 to 434 (MHFPALSGTLTLSYFIHNAVL). At 435-451 (TILRNQKHPENNARDLS) the chain is on the cytoplasmic side. The helical transmembrane segment at 452-472 (IGYCLVAFCYVFIGFTFFAAF) threads the bilayer. The Lumenal portion of the chain corresponds to 473 to 491 (PVQRSCISDNFLNNFGAGD). Residues 492 to 512 (VLSSTARLFLLFQMITVLPLL) form a helical membrane-spanning segment. The Cytoplasmic segment spans residues 513–533 (MFLVRSQLFYAIFGQTWPGAI). A helical transmembrane segment spans residues 534–554 (RVIILNVLLIAVAVGFATFYP). At 555-561 (NVGSILR) the chain is on the lumenal side. The chain crosses the membrane as a helical span at residues 562 to 582 (YVGSISGLVYVFALPAMVYIK). At 583-594 (QSEAAGTLTPMK) the chain is on the cytoplasmic side. The chain crosses the membrane as a helical span at residues 595 to 615 (KYAHYGIIVIGVANLIAQFVI).

It belongs to the amino acid/polyamine transporter 2 family. SLC38A9 subfamily.

It is found in the lysosome membrane. The protein resides in the late endosome membrane. With respect to regulation, amino acid transport is sodium-dependent. Transport of leucine, tyrosine and phenylalanine is increased by arginine binding. Its function is as follows. Lysosomal amino acid transporter involved in the activation of mTORC1 in response to amino acid levels. Probably acts as an amino acid sensor of the Rag GTPases and Ragulator complexes, 2 complexes involved in amino acid sensing and activation of mTORC1, a signaling complex promoting cell growth in response to growth factors, energy levels, and amino acids. The chain is Sodium-coupled neutral amino acid transporter 9 homolog from Caenorhabditis elegans.